Here is a 749-residue protein sequence, read N- to C-terminus: Meiotically up-regulated gene 122 protein (749 aa).

Residues 1–20 (MYRKWDLCITRHLLPYIEHS) are Cytoplasmic-facing. A helical; Signal-anchor for type II membrane protein membrane pass occupies residues 21–41 (VIPIIALLVLSLIFYILYICF). Residues 42–749 (GTTSYILSGI…LLSNALRSII (708 aa)) are Lumenal-facing. Positions 88-261 (PPELEAPLQL…CIILYFSSSE (174 aa)) constitute a PXA domain. The 112-residue stretch at 311-422 (LHYQFLKEAS…KFFAKSMRSH (112 aa)) folds into the PX domain. Disordered stretches follow at residues 439–489 (QSSS…LSQQ) and 504–546 (GSCT…PPKP). Polar residues-rich tracts occupy residues 440–461 (SSSVPTLPNLTNISRVLSNKTS) and 475–489 (LSHQSTLAPEPLSQQ).

It belongs to the sorting nexin family.

The protein localises to the endoplasmic reticulum membrane. Has a role in meiosis. This Schizosaccharomyces pombe (strain 972 / ATCC 24843) (Fission yeast) protein is Meiotically up-regulated gene 122 protein (mug122).